The following is a 327-amino-acid chain: Interleukin-12 subunit beta (327 aa).

The signal sequence occupies residues 1-22; it reads MHPQQLVVSWFSLVLLASPIVA. The Ig-like C2-type domain maps to 23 to 106; the sequence is IWELEKNVYI…LSRSLLLLHK (84 aa). A disulfide bridge connects residues Cys-50 and Cys-90. Residue Asn-223 is glycosylated (N-linked (GlcNAc...) asparagine). The Fibronectin type-III domain maps to 238 to 327; sequence PPKNLQLKPL…WSEWASVSCS (90 aa).

This sequence belongs to the IL-12B family. Heterodimer with IL12A; disulfide-linked. The heterodimer is known as interleukin IL-12. Heterodimer with IL23A; disulfide-linked. The heterodimer is known as interleukin IL-23. Also secreted as a monomer. Interacts with NBR1; this interaction promotes IL-12 secretion.

Cytokine that can act as a growth factor for activated T and NK cells, enhance the lytic activity of NK/lymphokine-activated killer cells, and stimulate the production of IFN-gamma by resting PBMC. Its function is as follows. Associates with IL23A to form the IL-23 interleukin, a heterodimeric cytokine which functions in innate and adaptive immunity. IL-23 may constitute with IL-17 an acute response to infection in peripheral tissues. IL-23 binds to a heterodimeric receptor complex composed of IL12RB1 and IL23R, activates the Jak-Stat signaling cascade, stimulates memory rather than naive T-cells and promotes production of pro-inflammatory cytokines. IL-23 induces autoimmune inflammation and thus may be responsible for autoimmune inflammatory diseases and may be important for tumorigenesis. The sequence is that of Interleukin-12 subunit beta (IL12B) from Bubalus bubalis (Domestic water buffalo).